A 632-amino-acid chain; its full sequence is Phosphatidylinositol-3,5-bisphosphate 3-phosphatase MTMR8 (632 aa).

The region spanning 126–500 is the Myotubularin phosphatase domain; sequence GWELISVVND…LHFKFWCGMY (375 aa). A 1,2-diacyl-sn-glycero-3-phospho-(1D-myo-inositol-3,5-bisphosphate) contacts are provided by N250, N275, and I276. A 1,2-diacyl-sn-glycero-3-phospho-(1D-myo-inositol-3-phosphate) contacts are provided by N250, N275, and I276. The active-site Phosphocysteine intermediate is C338. A 1,2-diacyl-sn-glycero-3-phospho-(1D-myo-inositol-3,5-bisphosphate) is bound by residues S339, D340, G341, W342, D343, R344, K380, and R384. A 1,2-diacyl-sn-glycero-3-phospho-(1D-myo-inositol-3-phosphate) contacts are provided by S339, D340, G341, W342, D343, and R344. Phosphate is bound by residues S339 and D340. 3 residues coordinate phosphate: W342, D343, and R344. Residue R384 participates in a 1,2-diacyl-sn-glycero-3-phospho-(1D-myo-inositol-3-phosphate) binding. Residues 545 to 632 form a disordered region; that stretch reads LPDPAGPINT…HSKEEVQESS (88 aa). Residues 602 to 632 show a composition bias toward basic and acidic residues; the sequence is EPAANEHDLSSKDKPVFVETEHSKEEVQESS.

Belongs to the protein-tyrosine phosphatase family. Non-receptor class myotubularin subfamily. In terms of assembly, homodimer.

Its subcellular location is the nucleus envelope. It catalyses the reaction a 1,2-diacyl-sn-glycero-3-phospho-(1D-myo-inositol-3,5-bisphosphate) + H2O = a 1,2-diacyl-sn-glycero-3-phospho-(1D-myo-inositol-5-phosphate) + phosphate. The enzyme catalyses a 1,2-diacyl-sn-glycero-3-phospho-(1D-myo-inositol-3-phosphate) + H2O = a 1,2-diacyl-sn-glycero-3-phospho-(1D-myo-inositol) + phosphate. It carries out the reaction 1,2-dioctanoyl-sn-glycero-3-phospho-(1D-myo-inositol-3,5-bisphosphate) + H2O = 1,2-dioctanoyl-sn-glycero-3-phospho-(1D-myo-inositol-5-phosphate) + phosphate. Lipid phosphatase that specifically dephosphorylates the D-3 position of phosphatidylinositol 3-phosphate and phosphatidylinositol 3,5-bisphosphate, generating phosphatidylinositol and phosphatidylinositol 5-phosphate. This is Phosphatidylinositol-3,5-bisphosphate 3-phosphatase MTMR8 (mtmr8) from Danio rerio (Zebrafish).